We begin with the raw amino-acid sequence, 292 residues long: 4-hydroxy-tetrahydrodipicolinate synthase (292 aa).

T45 lines the pyruvate pocket. Y133 (proton donor/acceptor) is an active-site residue. K161 (schiff-base intermediate with substrate) is an active-site residue. A pyruvate-binding site is contributed by I203.

The protein belongs to the DapA family. As to quaternary structure, homodimer.

It is found in the cytoplasm. It catalyses the reaction L-aspartate 4-semialdehyde + pyruvate = (2S,4S)-4-hydroxy-2,3,4,5-tetrahydrodipicolinate + H2O + H(+). Its pathway is amino-acid biosynthesis; L-lysine biosynthesis via DAP pathway; (S)-tetrahydrodipicolinate from L-aspartate: step 3/4. Catalyzes the condensation of (S)-aspartate-beta-semialdehyde [(S)-ASA] and pyruvate to 4-hydroxy-tetrahydrodipicolinate (HTPA). The sequence is that of 4-hydroxy-tetrahydrodipicolinate synthase from Pseudomonas syringae pv. syringae (strain B728a).